A 491-amino-acid chain; its full sequence is Rab5 GDP/GTP exchange factor (491 aa).

The interaction with ubiquitinated proteins stretch occupies residues methionine 1–serine 74. The A20-type zinc finger occupies aspartate 13 to arginine 47. The Zn(2+) site is built by cysteine 19, cysteine 23, cysteine 35, and cysteine 38. The interval glutamate 66–lysine 85 is disordered. A compositionally biased stretch (low complexity) spans phenylalanine 69–serine 84. Serine 124 and serine 132 each carry phosphoserine. Lysine 151 and lysine 170 each carry N6-acetyllysine. The 144-residue stretch at glutamate 232 to asparagine 375 folds into the VPS9 domain. Serine 373, serine 377, and serine 390 each carry phosphoserine. Residues valine 407–glutamate 448 adopt a coiled-coil conformation. Residues proline 462 to glycine 491 form a disordered region.

Heterodimer with RABEP1. The heterodimer binds RAB4A and RAB5A that have been activated by GTP-binding. Binds TSC2, GGA1, GGA2, GGA3, AP1G1 and AP1G2. Interacts with RAB21, and with 100-fold lower affinity also with RAB22. Interacts with ubiquitinated EGFR. Interacts with RGS14; the interaction is GTP-dependent. In terms of processing, monoubiquitinated. In terms of tissue distribution, expressed in the white matter tracts of the cerebellum, the fimbria hippocampi and the corpus callosum.

Its subcellular location is the cytoplasm. It is found in the early endosome. The protein localises to the recycling endosome. Its function is as follows. Rab effector protein acting as linker between gamma-adaptin, RAB4A or RAB5A. Involved in endocytic membrane fusion and membrane trafficking of recycling endosomes. Stimulates nucleotide exchange on RAB5A. Can act as a ubiquitin ligase. The protein is Rab5 GDP/GTP exchange factor (Rabgef1) of Mus musculus (Mouse).